The primary structure comprises 322 residues: MSDSLIDLLLEVGKALIVLVGIVGAGAFMSFIERRLLALWQDRYGPNRVGPFGLLQLAADMIKMFFKEDWIPPFADRRIFILAPIIAFTAFILAFAVVPLTPTWGVADLNVGLLYILAIAGLAVYAVLFAGWSSNNKYSLLGSLRASAQTLSYEVFLGLSLMGIVIQTGSFNLRDIVEAQAGLWNVVPQILGFITFLFAGVAVTHRHPFDQPEAEQELADGYHIEYAGMKWGLFFVGEYIGIVLISSLIVTLFFGGWHGPWLPPFIWFALKTACFMVFFILLRASLPRPRFDQVMSFGWKVCLPLTLVNMLITGAVVLINVQ.

8 consecutive transmembrane segments (helical) span residues 12–32, 79–99, 111–131, 151–171, 183–203, 234–254, 262–282, and 301–321; these read VGKA…MSFI, IFIL…AVVP, VGLL…LFAG, LSYE…TGSF, LWNV…GVAV, FFVG…TLFF, LPPF…FILL, and VCLP…LINV.

Belongs to the complex I subunit 1 family. In terms of assembly, NDH-1 is composed of 14 different subunits. Subunits NuoA, H, J, K, L, M, N constitute the membrane sector of the complex.

The protein resides in the cell inner membrane. It catalyses the reaction a quinone + NADH + 5 H(+)(in) = a quinol + NAD(+) + 4 H(+)(out). Its function is as follows. NDH-1 shuttles electrons from NADH, via FMN and iron-sulfur (Fe-S) centers, to quinones in the respiratory chain. The immediate electron acceptor for the enzyme in this species is believed to be ubiquinone. Couples the redox reaction to proton translocation (for every two electrons transferred, four hydrogen ions are translocated across the cytoplasmic membrane), and thus conserves the redox energy in a proton gradient. This subunit may bind ubiquinone. The sequence is that of NADH-quinone oxidoreductase subunit H from Aeromonas salmonicida (strain A449).